The chain runs to 992 residues: MADKIFTFFLILSSISPLLCSSLISPLNLSLIRQANVLISLKQSFDSYDPSLDSWNIPNFNSLCSWTGVSCDNLNQSITRLDLSNLNISGTISPEISRLSPSLVFLDISSNSFSGELPKEIYELSGLEVLNISSNVFEGELETRGFSQMTQLVTLDAYDNSFNGSLPLSLTTLTRLEHLDLGGNYFDGEIPRSYGSFLSLKFLSLSGNDLRGRIPNELANITTLVQLYLGYYNDYRGGIPADFGRLINLVHLDLANCSLKGSIPAELGNLKNLEVLFLQTNELTGSVPRELGNMTSLKTLDLSNNFLEGEIPLELSGLQKLQLFNLFFNRLHGEIPEFVSELPDLQILKLWHNNFTGKIPSKLGSNGNLIEIDLSTNKLTGLIPESLCFGRRLKILILFNNFLFGPLPEDLGQCEPLWRFRLGQNFLTSKLPKGLIYLPNLSLLELQNNFLTGEIPEEEAGNAQFSSLTQINLSNNRLSGPIPGSIRNLRSLQILLLGANRLSGQIPGEIGSLKSLLKIDMSRNNFSGKFPPEFGDCMSLTYLDLSHNQISGQIPVQISQIRILNYLNVSWNSFNQSLPNELGYMKSLTSADFSHNNFSGSVPTSGQFSYFNNTSFLGNPFLCGFSSNPCNGSQNQSQSQLLNQNNARSRGEISAKFKLFFGLGLLGFFLVFVVLAVVKNRRMRKNNPNLWKLIGFQKLGFRSEHILECVKENHVIGKGGRGIVYKGVMPNGEEVAVKKLLTITKGSSHDNGLAAEIQTLGRIRHRNIVRLLAFCSNKDVNLLVYEYMPNGSLGEVLHGKAGVFLKWETRLQIALEAAKGLCYLHHDCSPLIIHRDVKSNNILLGPEFEAHVADFGLAKFMMQDNGASECMSSIAGSYGYIAPEYAYTLRIDEKSDVYSFGVVLLELITGRKPVDNFGEEGIDIVQWSKIQTNCNRQGVVKIIDQRLSNIPLAEAMELFFVAMLCVQEHSVERPTMREVVQMISQAKQPNTF.

The signal sequence occupies residues 1–21 (MADKIFTFFLILSSISPLLCS). The Extracellular portion of the chain corresponds to 22–656 (SLISPLNLSL…ARSRGEISAK (635 aa)). Asparagine 28 is a glycosylation site (N-linked (GlcNAc...) asparagine). Cysteine 64 and cysteine 71 are oxidised to a cystine. 2 N-linked (GlcNAc...) asparagine glycosylation sites follow: asparagine 75 and asparagine 87. LRR repeat units lie at residues 75 to 99 (NQSITRLDLSNLNISGTISPEISRL), 100 to 124 (SPSLVFLDISSNSFSGELPKEIYEL), 126 to 148 (GLEVLNISSNVFEGELETRGFSQ), 150 to 173 (TQLVTLDAYDNSFNGSLPLSLTTL), 174 to 199 (TRLEHLDLGGNYFDGEIPRSYGSFLS), and 201 to 221 (KFLSLSGNDLRGRIPNELANI). N-linked (GlcNAc...) asparagine glycosylation is found at asparagine 131 and asparagine 163. Asparagine 220 carries N-linked (GlcNAc...) asparagine glycosylation. The CLE45 peptide binding signature appears at 226–231 (QLYLGY). 15 LRR repeats span residues 246 to 270 (LINLVHLDLANCSLKGSIPAELGNL), 271 to 294 (KNLEVLFLQTNELTGSVPRELGNM), 296 to 320 (SLKTLDLSNNFLEGEIPLELSGLQK), 322 to 342 (QLFNLFFNRLHGEIPEFVSEL), 343 to 366 (PDLQILKLWHNNFTGKIPSKLGSN), 368 to 391 (NLIEIDLSTNKLTGLIPESLCFGR), 393 to 414 (LKILILFNNFLFGPLPEDLGQC), 415 to 438 (EPLWRFRLGQNFLTSKLPKGLIYL), 439 to 462 (PNLSLLELQNNFLTGEIPEEEAGN), 465 to 489 (FSSLTQINLSNNRLSGPIPGSIRNL), 491 to 513 (SLQILLLGANRLSGQIPGEIGSL), 514 to 536 (KSLLKIDMSRNNFSGKFPPEFGD), 537 to 561 (CMSLTYLDLSHNQISGQIPVQISQI), 563 to 585 (ILNYLNVSWNSFNQSLPNELGYM), and 586 to 610 (KSLTSADFSHNNFSGSVPTSGQFSY). Asparagine 256 and asparagine 293 each carry an N-linked (GlcNAc...) asparagine glycan. Asparagine 354 carries N-linked (GlcNAc...) asparagine glycosylation. 2 N-linked (GlcNAc...) asparagine glycosylation sites follow: asparagine 440 and asparagine 472. Asparagine 525 carries N-linked (GlcNAc...) asparagine glycosylation. 6 N-linked (GlcNAc...) asparagine glycosylation sites follow: asparagine 568, asparagine 575, asparagine 597, asparagine 613, asparagine 631, and asparagine 635. A helical membrane pass occupies residues 657–677 (FKLFFGLGLLGFFLVFVVLAV). Topologically, residues 678-992 (VKNRRMRKNN…ISQAKQPNTF (315 aa)) are cytoplasmic. The Protein kinase domain occupies 710–992 (VKENHVIGKG…ISQAKQPNTF (283 aa)). ATP-binding positions include 716 to 724 (IGKGGRGIV) and lysine 738. Aspartate 836 serves as the catalytic Proton acceptor.

This sequence belongs to the protein kinase superfamily. Ser/Thr protein kinase family. In terms of assembly, interacts with CLE45, especially in roots. Binds to the dimer CLV2/CRN. In terms of tissue distribution, expressed in seedlings, roots, leaves, stems, inflorescences, flowers and siliques. In roots, confined to protophloem and sieve element precursor cells.

The protein resides in the cell membrane. It is found in the endoplasmic reticulum membrane. The catalysed reaction is L-seryl-[protein] + ATP = O-phospho-L-seryl-[protein] + ADP + H(+). It catalyses the reaction L-threonyl-[protein] + ATP = O-phospho-L-threonyl-[protein] + ADP + H(+). Its function is as follows. Necessary for male gametophyte development, as well as ovule specification and function. Required for the development of high-ordered vascular strands within the leaf and a correlated control of leaf shape, size and symmetry. LRR-rich receptor-like kinase (LRR-RLK) involved in the perception of CLE45 peptide ligand which mediates root growth inhibition by repressing protophloem differentiation; this mechanism requires CRN. BRX, BAM3, and CLE45 act together to regulate the transition of protophloem cells from proliferation to differentiation, thus impinging on postembryonic growth capacity of the root meristem. Necessary for CLE45 peptide-triggered accumulation of MAKR5 in developing sieve elements. This Arabidopsis thaliana (Mouse-ear cress) protein is Leucine-rich repeat receptor-like serine/threonine-protein kinase BAM3.